The chain runs to 297 residues: MAYNWWVIRVLCNKSLEEVIFWRLDSFGCRGTASQIQGKNCLVLAYLPEEQTQLLDLSALSLNFRQDALCMNFPVPIMDWYLIEEEDWASSWKQYWQPQEIGDHFLIHPAWLDLPEQSDKIILRLDPGAAFGTGTHPTTQLCLESLEMRLGLEPHPEAIIADIGCGSGILSIGAALLGVHQIYAVDIDPLAIRSTINNGKLNQIKAEKLIVEQGDIKKLIKLCPKPVDGIVCNILAEVIIDIIPHLTAIAKPKTWGIISGILLEQAKLIGDTLEQNGWVVATLWKKEEWCCFNIRYS.

4 residues coordinate S-adenosyl-L-methionine: threonine 139, glycine 164, aspartate 186, and asparagine 233.

Belongs to the methyltransferase superfamily. PrmA family.

The protein localises to the cytoplasm. The enzyme catalyses L-lysyl-[protein] + 3 S-adenosyl-L-methionine = N(6),N(6),N(6)-trimethyl-L-lysyl-[protein] + 3 S-adenosyl-L-homocysteine + 3 H(+). Its function is as follows. Methylates ribosomal protein L11. The polypeptide is Ribosomal protein L11 methyltransferase (Trichodesmium erythraeum (strain IMS101)).